Reading from the N-terminus, the 96-residue chain is MALTREEVLKIAKLSKLSFEDKEIEKFQVELNDILKYIDMLNEVDTSKVEPLVYINESVNNFREKEEKPSLEIEKVLFNAPESAENAIVVPKVIGE.

This sequence belongs to the GatC family. As to quaternary structure, heterotrimer of A, B and C subunits.

The catalysed reaction is L-glutamyl-tRNA(Gln) + L-glutamine + ATP + H2O = L-glutaminyl-tRNA(Gln) + L-glutamate + ADP + phosphate + H(+). It catalyses the reaction L-aspartyl-tRNA(Asn) + L-glutamine + ATP + H2O = L-asparaginyl-tRNA(Asn) + L-glutamate + ADP + phosphate + 2 H(+). In terms of biological role, allows the formation of correctly charged Asn-tRNA(Asn) or Gln-tRNA(Gln) through the transamidation of misacylated Asp-tRNA(Asn) or Glu-tRNA(Gln) in organisms which lack either or both of asparaginyl-tRNA or glutaminyl-tRNA synthetases. The reaction takes place in the presence of glutamine and ATP through an activated phospho-Asp-tRNA(Asn) or phospho-Glu-tRNA(Gln). This chain is Aspartyl/glutamyl-tRNA(Asn/Gln) amidotransferase subunit C, found in Fusobacterium nucleatum subsp. nucleatum (strain ATCC 25586 / DSM 15643 / BCRC 10681 / CIP 101130 / JCM 8532 / KCTC 2640 / LMG 13131 / VPI 4355).